A 78-amino-acid polypeptide reads, in one-letter code: Large ribosomal subunit protein bL28 (78 aa).

A disordered region spans residues 1-31; that stretch reads MAAHCQVTGAEPGFGHSISHSHRRNKRRFDP.

It belongs to the bacterial ribosomal protein bL28 family.

In Pseudarthrobacter chlorophenolicus (strain ATCC 700700 / DSM 12829 / CIP 107037 / JCM 12360 / KCTC 9906 / NCIMB 13794 / A6) (Arthrobacter chlorophenolicus), this protein is Large ribosomal subunit protein bL28.